A 264-amino-acid chain; its full sequence is tRNA (guanine-N(7)-)-methyltransferase (264 aa).

A disordered region spans residues 1–39 (MIHDDDPNAPGAPHDDATAAPASATRAAPAAGDDDDANP). A compositionally biased stretch (low complexity) spans 18 to 31 (TAAPASATRAAPAA). S-adenosyl-L-methionine contacts are provided by Glu-94, Glu-119, Asp-146, and Asp-169. Residue Asp-169 is part of the active site. Residues Lys-173, Asp-205, and 240-243 (TKFE) contribute to the substrate site.

This sequence belongs to the class I-like SAM-binding methyltransferase superfamily. TrmB family.

The catalysed reaction is guanosine(46) in tRNA + S-adenosyl-L-methionine = N(7)-methylguanosine(46) in tRNA + S-adenosyl-L-homocysteine. Its pathway is tRNA modification; N(7)-methylguanine-tRNA biosynthesis. Its function is as follows. Catalyzes the formation of N(7)-methylguanine at position 46 (m7G46) in tRNA. This is tRNA (guanine-N(7)-)-methyltransferase from Burkholderia mallei (strain ATCC 23344).